A 591-amino-acid chain; its full sequence is V-type ATP synthase alpha chain (591 aa).

Position 232–239 (232–239 (GPFGAGKT)) interacts with ATP.

Belongs to the ATPase alpha/beta chains family.

It catalyses the reaction ATP + H2O + 4 H(+)(in) = ADP + phosphate + 5 H(+)(out). Produces ATP from ADP in the presence of a proton gradient across the membrane. The V-type alpha chain is a catalytic subunit. This Clostridium perfringens (strain ATCC 13124 / DSM 756 / JCM 1290 / NCIMB 6125 / NCTC 8237 / Type A) protein is V-type ATP synthase alpha chain.